We begin with the raw amino-acid sequence, 406 residues long: Tyrosine--tRNA ligase (406 aa).

Position 35 (Tyr-35) interacts with L-tyrosine. A 'HIGH' region motif is present at residues 40–49; sequence ATSASLHIGH. L-tyrosine is bound by residues Tyr-167 and Gln-171. Positions 227-231 match the 'KMSKS' region motif; it reads KMGKS. Position 230 (Lys-230) interacts with ATP. The S4 RNA-binding domain occupies 341–405; that stretch reads ILLVDLMVLA…IGKKKILRIV (65 aa).

The protein belongs to the class-I aminoacyl-tRNA synthetase family. TyrS type 1 subfamily. In terms of assembly, homodimer.

The protein localises to the cytoplasm. It carries out the reaction tRNA(Tyr) + L-tyrosine + ATP = L-tyrosyl-tRNA(Tyr) + AMP + diphosphate + H(+). Functionally, catalyzes the attachment of tyrosine to tRNA(Tyr) in a two-step reaction: tyrosine is first activated by ATP to form Tyr-AMP and then transferred to the acceptor end of tRNA(Tyr). This is Tyrosine--tRNA ligase from Borrelia duttonii (strain Ly).